The sequence spans 889 residues: Protein translocase subunit SecA (889 aa).

ATP contacts are provided by residues Q87, 105-109 (GEGKT), and D494. The tract at residues 823-889 (ESLRPEEADL…RMDKDTKGKR (67 aa)) is disordered. The span at 867–889 (PRDDRPMNREERRRMDKDTKGKR) shows a compositional bias: basic and acidic residues.

This sequence belongs to the SecA family. As to quaternary structure, monomer and homodimer. Part of the essential Sec protein translocation apparatus which comprises SecA, SecYEG and auxiliary proteins SecDF-YajC and YidC.

Its subcellular location is the cell inner membrane. It is found in the cytoplasm. It catalyses the reaction ATP + H2O + cellular proteinSide 1 = ADP + phosphate + cellular proteinSide 2.. In terms of biological role, part of the Sec protein translocase complex. Interacts with the SecYEG preprotein conducting channel. Has a central role in coupling the hydrolysis of ATP to the transfer of proteins into and across the cell membrane, serving as an ATP-driven molecular motor driving the stepwise translocation of polypeptide chains across the membrane. The sequence is that of Protein translocase subunit SecA from Bdellovibrio bacteriovorus (strain ATCC 15356 / DSM 50701 / NCIMB 9529 / HD100).